A 488-amino-acid chain; its full sequence is Protein nucleotidyltransferase YdiU (488 aa).

Positions 90, 92, 93, 113, 125, 126, 176, and 183 each coordinate ATP. The Proton acceptor role is filled by aspartate 252. Mg(2+) is bound by residues asparagine 253 and aspartate 262. Aspartate 262 serves as a coordination point for ATP.

It belongs to the SELO family. The cofactor is Mg(2+). It depends on Mn(2+) as a cofactor.

It catalyses the reaction L-seryl-[protein] + ATP = 3-O-(5'-adenylyl)-L-seryl-[protein] + diphosphate. The catalysed reaction is L-threonyl-[protein] + ATP = 3-O-(5'-adenylyl)-L-threonyl-[protein] + diphosphate. It carries out the reaction L-tyrosyl-[protein] + ATP = O-(5'-adenylyl)-L-tyrosyl-[protein] + diphosphate. The enzyme catalyses L-histidyl-[protein] + UTP = N(tele)-(5'-uridylyl)-L-histidyl-[protein] + diphosphate. It catalyses the reaction L-seryl-[protein] + UTP = O-(5'-uridylyl)-L-seryl-[protein] + diphosphate. The catalysed reaction is L-tyrosyl-[protein] + UTP = O-(5'-uridylyl)-L-tyrosyl-[protein] + diphosphate. Its function is as follows. Nucleotidyltransferase involved in the post-translational modification of proteins. It can catalyze the addition of adenosine monophosphate (AMP) or uridine monophosphate (UMP) to a protein, resulting in modifications known as AMPylation and UMPylation. This is Protein nucleotidyltransferase YdiU from Thiobacillus denitrificans (strain ATCC 25259 / T1).